The sequence spans 118 residues: Secreted RxLR effector protein 143 (118 aa).

A signal peptide spans 1-18 (MRHCAFLFRLFLIGYSCS). The segment covering 35–65 (DELPRAEQWDSDGKRILQADDPEHIPTEERG) has biased composition (basic and acidic residues). The segment at 35 to 66 (DELPRAEQWDSDGKRILQADDPEHIPTEERGI) is disordered. A RxLR-dEER motif is present at residues 49–64 (RILQADDPEHIPTEER).

The protein belongs to the RxLR effector family.

It is found in the secreted. The protein localises to the host cell membrane. Its function is as follows. Secreted effector that completely suppresses the host cell death induced by cell death-inducing proteins. This Plasmopara viticola (Downy mildew of grapevine) protein is Secreted RxLR effector protein 143.